A 493-amino-acid polypeptide reads, in one-letter code: MFS-type transporter efuF (493 aa).

Helical transmembrane passes span 90–110 (ITLV…NMLL), 117–137 (IMLP…CAVH), 147–167 (LLMG…LTTF), 179–199 (IFYG…YGVF), 211–231 (FLMI…YWHL), 279–299 (IALY…VGNF), 316–336 (LYTV…CTSS), 343–363 (STHL…LITL), 370–390 (GPTY…SCIF), 406–426 (AVTG…SLAF), and 435–455 (IPAL…VLGF).

It belongs to the major facilitator superfamily.

The protein localises to the membrane. MFS-type transporter; part of the gene cluster that mediates the biosynthesis of enfumafungin, a glycosylated fernene-type triterpenoid with potent antifungal activity, mediated by its interaction with beta-1,3-glucan synthase and the fungal cell wall. Might facilitate the transport of glucose units to the subcellular site of enfumafungin biosynthesis. The chain is MFS-type transporter efuF from Hormonema carpetanum.